The chain runs to 400 residues: S-adenosylmethionine synthase (400 aa).

Position 17 (His17) interacts with ATP. A Mg(2+)-binding site is contributed by Asp19. Glu45 provides a ligand contact to K(+). L-methionine is bound by residues Glu58 and Gln101. Residues 101-111 form a flexible loop region; that stretch reads QSADIAMGVDQ. ATP-binding positions include 177–179, 244–245, Asp253, 259–260, Ala276, and Lys280; these read DGK, RF, and RK. Residue Asp253 coordinates L-methionine. Position 284 (Lys284) interacts with L-methionine.

This sequence belongs to the AdoMet synthase family. In terms of assembly, homotetramer; dimer of dimers. It depends on Mg(2+) as a cofactor. Requires K(+) as cofactor.

It localises to the cytoplasm. The enzyme catalyses L-methionine + ATP + H2O = S-adenosyl-L-methionine + phosphate + diphosphate. Its pathway is amino-acid biosynthesis; S-adenosyl-L-methionine biosynthesis; S-adenosyl-L-methionine from L-methionine: step 1/1. In terms of biological role, catalyzes the formation of S-adenosylmethionine (AdoMet) from methionine and ATP. The overall synthetic reaction is composed of two sequential steps, AdoMet formation and the subsequent tripolyphosphate hydrolysis which occurs prior to release of AdoMet from the enzyme. This Bacillus velezensis (strain DSM 23117 / BGSC 10A6 / LMG 26770 / FZB42) (Bacillus amyloliquefaciens subsp. plantarum) protein is S-adenosylmethionine synthase.